The following is a 588-amino-acid chain: 2-succinyl-5-enolpyruvyl-6-hydroxy-3-cyclohexene-1-carboxylate synthase (588 aa).

It belongs to the TPP enzyme family. MenD subfamily. As to quaternary structure, homodimer. Mg(2+) is required as a cofactor. The cofactor is Mn(2+). Requires thiamine diphosphate as cofactor.

It catalyses the reaction isochorismate + 2-oxoglutarate + H(+) = 5-enolpyruvoyl-6-hydroxy-2-succinyl-cyclohex-3-ene-1-carboxylate + CO2. Its pathway is quinol/quinone metabolism; 1,4-dihydroxy-2-naphthoate biosynthesis; 1,4-dihydroxy-2-naphthoate from chorismate: step 2/7. It functions in the pathway cofactor biosynthesis; phylloquinone biosynthesis. Its function is as follows. Catalyzes the thiamine diphosphate-dependent decarboxylation of 2-oxoglutarate and the subsequent addition of the resulting succinic semialdehyde-thiamine pyrophosphate anion to isochorismate to yield 2-succinyl-5-enolpyruvyl-6-hydroxy-3-cyclohexene-1-carboxylate (SEPHCHC). The protein is 2-succinyl-5-enolpyruvyl-6-hydroxy-3-cyclohexene-1-carboxylate synthase of Prochlorococcus marinus (strain MIT 9515).